A 236-amino-acid chain; its full sequence is Purine nucleoside phosphorylase DeoD-type 1 (236 aa).

His5 contacts a purine D-ribonucleoside. Phosphate-binding positions include Gly21, Arg25, Arg44, and 88 to 91 (RVGS). A purine D-ribonucleoside contacts are provided by residues 180 to 182 (EME) and 204 to 205 (TD). The Proton donor role is filled by Asp205.

This sequence belongs to the PNP/UDP phosphorylase family. Homohexamer; trimer of homodimers.

It carries out the reaction a purine D-ribonucleoside + phosphate = a purine nucleobase + alpha-D-ribose 1-phosphate. The enzyme catalyses a purine 2'-deoxy-D-ribonucleoside + phosphate = a purine nucleobase + 2-deoxy-alpha-D-ribose 1-phosphate. In terms of biological role, catalyzes the reversible phosphorolytic breakdown of the N-glycosidic bond in the beta-(deoxy)ribonucleoside molecules, with the formation of the corresponding free purine bases and pentose-1-phosphate. In Shewanella oneidensis (strain ATCC 700550 / JCM 31522 / CIP 106686 / LMG 19005 / NCIMB 14063 / MR-1), this protein is Purine nucleoside phosphorylase DeoD-type 1.